The primary structure comprises 104 residues: MFEGFDFSKMGQMLEDVQKQAKQMEEESKNKEFGAKSGGGLVSVRANGSGEILDISIDDSLLEDKESMQILLISAINDVLKSVEADKKNTASRMLGGLASMGIK.

Over residues aspartate 16 to glycine 34 the composition is skewed to basic and acidic residues. The tract at residues aspartate 16 to glycine 38 is disordered.

This sequence belongs to the YbaB/EbfC family. In terms of assembly, homodimer.

The protein localises to the cytoplasm. The protein resides in the nucleoid. In terms of biological role, binds to DNA and alters its conformation. May be involved in regulation of gene expression, nucleoid organization and DNA protection. The protein is Nucleoid-associated protein Ccon26_18480 of Campylobacter concisus (strain 13826).